The chain runs to 103 residues: Large ribosomal subunit protein uL23 (103 aa).

Belongs to the universal ribosomal protein uL23 family. Part of the 50S ribosomal subunit. Contacts protein L29, and trigger factor when it is bound to the ribosome.

Functionally, one of the early assembly proteins it binds 23S rRNA. One of the proteins that surrounds the polypeptide exit tunnel on the outside of the ribosome. Forms the main docking site for trigger factor binding to the ribosome. The chain is Large ribosomal subunit protein uL23 from Zymomonas mobilis subsp. mobilis (strain ATCC 31821 / ZM4 / CP4).